Here is a 678-residue protein sequence, read N- to C-terminus: Zinc finger protein 334 (678 aa).

The region spanning 8 to 79 is the KRAB domain; the sequence is VSFQDLTVNF…EEFSNQNYPE (72 aa). 14 C2H2-type zinc fingers span residues 235–257, 263–285, 291–313, 319–341, 347–369, 375–397, 403–425, 431–453, 459–481, 542–564, 570–592, 598–620, 626–648, and 654–676; these read NEPC…QRIH, YVCN…QRIH, YECS…QKIH, YECN…FRSH, YECK…QRTH, NECK…QRIH, YECS…RRSH, YECS…QITH, YECN…QRTH, YERN…RRIH, YECN…QKIH, and YECN…QKSH.

Belongs to the krueppel C2H2-type zinc-finger protein family.

It is found in the nucleus. In terms of biological role, may be involved in transcriptional regulation. This chain is Zinc finger protein 334 (ZNF334), found in Pongo abelii (Sumatran orangutan).